Consider the following 90-residue polypeptide: uncharacterized protein (90 aa).

This is an uncharacterized protein from Clostridium acetobutylicum (strain ATCC 824 / DSM 792 / JCM 1419 / IAM 19013 / LMG 5710 / NBRC 13948 / NRRL B-527 / VKM B-1787 / 2291 / W).